The following is a 137-amino-acid chain: Large ribosomal subunit protein uL16 (137 aa).

This sequence belongs to the universal ribosomal protein uL16 family. In terms of assembly, part of the 50S ribosomal subunit.

Its function is as follows. Binds 23S rRNA and is also seen to make contacts with the A and possibly P site tRNAs. This is Large ribosomal subunit protein uL16 from Spiroplasma citri.